Consider the following 336-residue polypeptide: NmrA-like family domain-containing oxidoreductase malD (336 aa).

NADP(+)-binding positions include 12–17 (GGTGNQ), 40–44 (RDPTS), 61–62 (DG), 82–84 (TNS), K140, and 163–166 (FMEA).

The protein belongs to the NmrA-type oxidoreductase family.

In terms of biological role, nmrA-like family domain-containing oxidoreductase; part of the gene cluster that mediates the biosynthesis of malbrancheamide, a dichlorinated fungal indole alkaloid that belongs to a family of natural products containing a characteristic bicyclo[2.2.2]diazaoctane core. The first step of malbrancheamide biosynthesis involves coupling of L-proline and L-tryptophan by malG, a bimodular NRPS, to produce L-Pro-L-Trp aldehyde through reductive offloading. This compound undergoes spontaneous cyclization and dehydration to give a dienamine which is reverse prenylated at C-2 by malE. The other prenyltransferase present in the cluster, malB, displays modest activity, suggesting that may be a redundant gene in the pathway. Subsequently, a [4+2] Diels-Alder cyclo-addition catalyzed by the bifunctional enzyme malC forms the characteristic bicyclo[2.2.2]diazaoctane ring of premalbrancheamid. Finally, the flavin-dependent halogenase malA catalyzes the iterative dichlorination of the indole ring of premalbrancheamide to yield C-9 monochlorinated malbrancheamide B, C-8 monochlorinated isomalbrancheamide B, and dichlorinated malbrancheamide. MalA is also able to brominate premalbrancheamide at C-9 to yield malbrancheamide C, and, to a lesser extend, at C-8 to yield isomalbrancheamide C. Finally, malA can brominate C-9 monochlorinated malbrancheamide B at C-8 to yield malbrancheamide D, or C-8 monochlorinated isomalbrancheamide B at C-9 to produce isomalbrancheamide D. The chain is NmrA-like family domain-containing oxidoreductase malD from Malbranchea aurantiaca.